We begin with the raw amino-acid sequence, 685 residues long: Polyphosphate kinase (685 aa).

Asn45 is an ATP binding site. Mg(2+) contacts are provided by Arg375 and Arg405. His435 (phosphohistidine intermediate) is an active-site residue. ATP contacts are provided by Tyr468, Arg564, and His592.

This sequence belongs to the polyphosphate kinase 1 (PPK1) family. It depends on Mg(2+) as a cofactor. Post-translationally, an intermediate of this reaction is the autophosphorylated ppk in which a phosphate is covalently linked to a histidine residue through a N-P bond.

The enzyme catalyses [phosphate](n) + ATP = [phosphate](n+1) + ADP. Catalyzes the reversible transfer of the terminal phosphate of ATP to form a long-chain polyphosphate (polyP). The polypeptide is Polyphosphate kinase (Neisseria gonorrhoeae (strain ATCC 700825 / FA 1090)).